A 150-amino-acid chain; its full sequence is Protein SprT-like (150 aa).

Positions 11–149 (ELVDKLSLTY…CGKCRGSLKE (139 aa)) constitute a SprT-like domain. Histidine 70 lines the Zn(2+) pocket. Glutamate 71 is an active-site residue. Histidine 74 is a binding site for Zn(2+).

It belongs to the SprT family. It depends on Zn(2+) as a cofactor.

Its subcellular location is the cytoplasm. This Oceanobacillus iheyensis (strain DSM 14371 / CIP 107618 / JCM 11309 / KCTC 3954 / HTE831) protein is Protein SprT-like.